The chain runs to 318 residues: Serine protease 41 (318 aa).

An N-terminal signal peptide occupies residues M1–G19. A propeptide spanning residues K20 to L54 is cleaved from the precursor. One can recognise a Peptidase S1 domain in the interval V55–S297. Cysteines 80 and 96 form a disulfide. Catalysis depends on charge relay system residues H95 and D147. 3 cysteine pairs are disulfide-bonded: C181/C255, C215/C234, and C245/C273. A glycan (N-linked (GlcNAc...) asparagine) is linked at N211. The active-site Charge relay system is S249. Residue N284 is glycosylated (N-linked (GlcNAc...) asparagine). S299 carries GPI-anchor amidated serine lipidation. The propeptide at T300 to P318 is removed in mature form.

The protein belongs to the peptidase S1 family. N-glycosylated.

It is found in the cell membrane. This Homo sapiens (Human) protein is Serine protease 41.